Consider the following 234-residue polypeptide: Ubiquitin domain-containing protein 2 (234 aa).

Residues 1 to 46 (MGGCVGAQHDSSGSLNENSDGTGVALGRNQPLKKEKPKWKSDYPMT) are disordered. The segment covering 9-21 (HDSSGSLNENSDG) has biased composition (polar residues). The segment covering 32-41 (LKKEKPKWKS) has biased composition (basic and acidic residues). The Ubiquitin-like domain maps to 152-227 (SQLRLRLSTG…VQVIVSQPVQ (76 aa)).

It is found in the cytoplasm. This chain is Ubiquitin domain-containing protein 2 (Ubtd2), found in Mus musculus (Mouse).